We begin with the raw amino-acid sequence, 331 residues long: Phosphate acyltransferase (331 aa).

This sequence belongs to the PlsX family. Homodimer. Probably interacts with PlsY.

The protein localises to the cytoplasm. It carries out the reaction a fatty acyl-[ACP] + phosphate = an acyl phosphate + holo-[ACP]. It participates in lipid metabolism; phospholipid metabolism. Catalyzes the reversible formation of acyl-phosphate (acyl-PO(4)) from acyl-[acyl-carrier-protein] (acyl-ACP). This enzyme utilizes acyl-ACP as fatty acyl donor, but not acyl-CoA. The chain is Phosphate acyltransferase from Chlorobaculum tepidum (strain ATCC 49652 / DSM 12025 / NBRC 103806 / TLS) (Chlorobium tepidum).